Consider the following 327-residue polypeptide: MSFLGGLFGPVCEIDVILNDAESRKTAELKTEEGKLEKHYLFYDGESVSGKVNINVKQTSKRLEHQGIRIEFVGQIELFSDKSNTHEFVNLVKELALPGELTQNRSYDFEFMQVEKPYESYVGANVRLRYFLKVTIVRRLSDLVKEYDLIVHQLATYPDVNNSIKMEVGIEDCLHIEFEYNKSKYHLKDVIVGKIYFLLVRIKIQHMELQLIKKEMTGIGPSTTTETETVAKYEIMDGAPVKGESIPIRLFLAGYDLTPTMRDVNKKFSVRYFLNLVLVDEEDRRYFKQQEIVLWRKAPEKMRKRNFHQRYESPEPRPSLSAEQPEM.

The disordered stretch occupies residues 305–327 (RNFHQRYESPEPRPSLSAEQPEM).

The protein belongs to the VPS26 family. In terms of assembly, component of the heterotrimeric retromer cargo-selective complex (CSC) which is believed to associate with variable sorting nexins to form functionally distinct retromer complex variants.

It localises to the cytoplasm. The protein resides in the endosome membrane. Its subcellular location is the early endosome. Acts as a component of the retromer cargo-selective complex (CSC). The CSC is believed to be the core functional component of retromer or respective retromer complex variants acting to prevent missorting of selected transmembrane cargo proteins into the lysosomal degradation pathway. Retromer mediates retrograde transport of cargo proteins from endosomes to the trans-Golgi network (TGN). In Danio rerio (Zebrafish), this protein is Vacuolar protein sorting-associated protein 26A (vps26a).